The chain runs to 347 residues: Probable tRNA N6-adenosine threonylcarbamoyltransferase (347 aa).

The a divalent metal cation site is built by histidine 109, histidine 113, and tyrosine 130. Residues 130 to 134, aspartate 162, glycine 177, glutamate 181, and asparagine 277 contribute to the substrate site; that span reads YVSGG. An a divalent metal cation-binding site is contributed by aspartate 305.

Belongs to the KAE1 / TsaD family. Component of the EKC/KEOPS complex; the whole complex dimerizes. Requires a divalent metal cation as cofactor.

The protein localises to the cytoplasm. It is found in the nucleus. It catalyses the reaction L-threonylcarbamoyladenylate + adenosine(37) in tRNA = N(6)-L-threonylcarbamoyladenosine(37) in tRNA + AMP + H(+). Its function is as follows. Component of the EKC/KEOPS complex that is required for the formation of a threonylcarbamoyl group on adenosine at position 37 (t(6)A37) in tRNAs that read codons beginning with adenine. The complex is probably involved in the transfer of the threonylcarbamoyl moiety of threonylcarbamoyl-AMP (TC-AMP) to the N6 group of A37. Likely plays a direct catalytic role in this reaction, but requires other protein(s) of the complex to fulfill this activity. The chain is Probable tRNA N6-adenosine threonylcarbamoyltransferase from Drosophila melanogaster (Fruit fly).